The sequence spans 320 residues: Aspartate carbamoyltransferase catalytic subunit (320 aa).

Carbamoyl phosphate is bound by residues R68 and T69. K96 is a binding site for L-aspartate. 3 residues coordinate carbamoyl phosphate: R118, H148, and Q151. R181 and R236 together coordinate L-aspartate. The carbamoyl phosphate site is built by G277 and P278.

This sequence belongs to the aspartate/ornithine carbamoyltransferase superfamily. ATCase family. As to quaternary structure, heterododecamer (2C3:3R2) of six catalytic PyrB chains organized as two trimers (C3), and six regulatory PyrI chains organized as three dimers (R2).

It catalyses the reaction carbamoyl phosphate + L-aspartate = N-carbamoyl-L-aspartate + phosphate + H(+). It participates in pyrimidine metabolism; UMP biosynthesis via de novo pathway; (S)-dihydroorotate from bicarbonate: step 2/3. In terms of biological role, catalyzes the condensation of carbamoyl phosphate and aspartate to form carbamoyl aspartate and inorganic phosphate, the committed step in the de novo pyrimidine nucleotide biosynthesis pathway. The protein is Aspartate carbamoyltransferase catalytic subunit of Delftia acidovorans (strain DSM 14801 / SPH-1).